The sequence spans 409 residues: uncharacterized protein (409 aa).

This is an uncharacterized protein from Mycoplasma genitalium (strain ATCC 33530 / DSM 19775 / NCTC 10195 / G37) (Mycoplasmoides genitalium).